We begin with the raw amino-acid sequence, 275 residues long: ATP synthase subunit delta (275 aa).

Belongs to the ATPase delta chain family. In terms of assembly, F-type ATPases have 2 components, F(1) - the catalytic core - and F(0) - the membrane proton channel. F(1) has five subunits: alpha(3), beta(3), gamma(1), delta(1), epsilon(1). F(0) has three main subunits: a(1), b(2) and c(10-14). The alpha and beta chains form an alternating ring which encloses part of the gamma chain. F(1) is attached to F(0) by a central stalk formed by the gamma and epsilon chains, while a peripheral stalk is formed by the delta and b chains.

It is found in the cell membrane. Its function is as follows. F(1)F(0) ATP synthase produces ATP from ADP in the presence of a proton or sodium gradient. F-type ATPases consist of two structural domains, F(1) containing the extramembraneous catalytic core and F(0) containing the membrane proton channel, linked together by a central stalk and a peripheral stalk. During catalysis, ATP synthesis in the catalytic domain of F(1) is coupled via a rotary mechanism of the central stalk subunits to proton translocation. In terms of biological role, this protein is part of the stalk that links CF(0) to CF(1). It either transmits conformational changes from CF(0) to CF(1) or is implicated in proton conduction. The chain is ATP synthase subunit delta from Pseudarthrobacter chlorophenolicus (strain ATCC 700700 / DSM 12829 / CIP 107037 / JCM 12360 / KCTC 9906 / NCIMB 13794 / A6) (Arthrobacter chlorophenolicus).